Reading from the N-terminus, the 359-residue chain is C-X-C chemokine receptor type 4 (359 aa).

The segment at 1–23 (MEPISVSIYTSDNYSEEVGSGDY) is important for chemokine binding and signaling. Residues 1-40 (MEPISVSIYTSDNYSEEVGSGDYDSNKEPCFRDENVHFNR) lie on the Extracellular side of the membrane. A Sulfotyrosine modification is found at tyrosine 9. N-linked (GlcNAc...) asparagine glycosylation occurs at asparagine 13. Tyrosine 14 is subject to Sulfotyrosine. O-linked (Xyl...) (chondroitin sulfate) serine glycosylation is present at serine 20. Tyrosine 23 is modified (sulfotyrosine). Disulfide bonds link cysteine 30/cysteine 281 and cysteine 111/cysteine 193. Residues 41–65 (IFLPTIYFIIFLTGIVGNGLVILVM) traverse the membrane as a helical segment. Topologically, residues 66–79 (GYQKKLRSMTDKYR) are cytoplasmic. Residues 80 to 101 (LHLSVADLLFVITLPFWAVDAM) form a helical membrane-spanning segment. Positions 96-99 (WAVD) are chemokine binding. Residues 102–112 (ADWYFGKFLCK) are Extracellular-facing. Residues 113–132 (AVHIIYTVNLYSSVLILAFI) form a helical membrane-spanning segment. The interval 115 to 119 (HIIYT) is chemokine binding. Over 133 to 156 (SLDRYLAIVHATNSQRPRKLLAEK) the chain is Cytoplasmic. Positions 135–137 (DRY) match the Important for signaling motif. The involved in dimerization; when bound to chemokine stretch occupies residues 137 to 149 (YLAIVHATNSQRP). A helical membrane pass occupies residues 157–176 (AVYVGVWIPALLLTIPDFIF). The Extracellular segment spans residues 177 to 202 (ADVSQGDISQGDDRYICDRLYPDSLW). The tract at residues 193 to 197 (CDRLY) is chemokine binding, important for signaling. The interval 198–217 (PDSLWMVVFQFQHIMVGLIL) is involved in dimerization. A helical membrane pass occupies residues 203–223 (MVVFQFQHIMVGLILPGIVIL). Residues 224–248 (SCYCIIISKLSHSKGHQKRKALKTT) lie on the Cytoplasmic side of the membrane. A helical membrane pass occupies residues 249-268 (VILILAFFACWLPYYVGISI). Topologically, residues 269-289 (DSFILLGVIKQGCDFESIVHK) are extracellular. The segment at 273 to 275 (LLG) is involved in dimerization. A helical membrane pass occupies residues 290–309 (WISITEALAFFHCCLNPILY). The Cytoplasmic portion of the chain corresponds to 310–359 (AFLGAKFKSSAQHALNSMSRGSSLKILSKGKRGGHSSVSTESESSSFHSS). A phosphoserine mark is found at serine 326 and serine 328. 2 positions are modified to phosphoserine; by PKC and GRK6: serine 331 and serine 332. Residues 335–359 (ILSKGKRGGHSSVSTESESSSFHSS) form a disordered region. A Phosphoserine; by GRK6 modification is found at serine 337. Lysine 338 is covalently cross-linked (Glycyl lysine isopeptide (Lys-Gly) (interchain with G-Cter in ubiquitin)). Over residues 344-359 (HSSVSTESESSSFHSS) the composition is skewed to low complexity. Serine 346 carries the post-translational modification Phosphoserine; by GRK6. Serine 355 and serine 358 each carry phosphoserine.

This sequence belongs to the G-protein coupled receptor 1 family. Monomer. Can form homodimers. Interacts with CD164. Interacts with ARRB2; the interaction is dependent on the C-terminal phosphorylation of CXCR4 and allows activation of MAPK1 and MAPK3. Interacts with ARR3; the interaction is dependent on the C-terminal phosphorylation of CXCR4 and modulates calcium mobilization. Interacts with RNF113A; the interaction, enhanced by CXCL12, promotes CXCR4 ubiquitination and subsequent degradation. Interacts (via the cytoplasmic C-terminal) with ITCH (via the WW domains I and II); the interaction, enhanced by CXCL12, promotes CXCR4 ubiquitination and leads to its degradation. Interacts with extracellular ubiquitin. Interacts with DBN1; this interaction is enhanced by antigenic stimulation. Following LPS binding, may form a complex with GDF5, HSP90AA1 and HSPA8. Phosphorylated on agonist stimulation. Rapidly phosphorylated on serine and threonine residues in the C-terminal. Phosphorylation at Ser-331 and Ser-332 leads to recruitment of ITCH, ubiquitination and protein degradation. In terms of processing, ubiquitinated after ligand binding, leading to its degradation. Ubiquitinated by ITCH at the cell membrane on agonist stimulation. The ubiquitin-dependent mechanism, endosomal sorting complex required for transport (ESCRT), then targets CXCR4 for lysosomal degradation. This process is dependent also on prior Ser-/Thr-phosphorylation in the C-terminal of CXCR4. Also binding of ARRB1 to STAM negatively regulates CXCR4 sorting to lysosomes though modulating ubiquitination of SFR5S. Post-translationally, sulfation is required for efficient binding of CXCL12/SDF-1alpha and promotes its dimerization. O- and N-glycosylated. N-glycosylation can mask coreceptor function. The O-glycosylation chondroitin sulfate attachment does not affect interaction with CXCL12/SDF-1alpha nor its coreceptor activity. As to expression, lymphocytes, macrophages, neutrophils, microglial cells and astrocytes. Found in spleen, thymus, bone marrow, lymph nodes and, at lower levels in brain, small intestine, stomach and kidney. CXCR4-A is predominant in all tissues tested. During embryonic development, high levels are detected in the endothelium of developing blood vessels and in many regions of the developing brain including the olfactory epithelium, olfactory bulb, hippocampus, cerebellum and spinal cord.

Its subcellular location is the cell membrane. It is found in the cell junction. It localises to the early endosome. The protein resides in the late endosome. The protein localises to the lysosome. Its function is as follows. Receptor for the C-X-C chemokine CXCL12/SDF-1 that transduces a signal by increasing intracellular calcium ion levels and enhancing MAPK1/MAPK3 activation. Involved in the AKT signaling cascade. Plays a role in regulation of cell migration, e.g. during wound healing. Acts as a receptor for extracellular ubiquitin; leading to enhanced intracellular calcium ions and reduced cellular cAMP levels. Binds bacterial lipopolysaccharide (LPS) et mediates LPS-induced inflammatory response, including TNF secretion by monocytes. Involved in hematopoiesis and in cardiac ventricular septum formation. Also plays an essential role in vascularization of the gastrointestinal tract, probably by regulating vascular branching and/or remodeling processes in endothelial cells. Involved in cerebellar development. In the CNS, could mediate hippocampal-neuron survival. In Mus musculus (Mouse), this protein is C-X-C chemokine receptor type 4 (Cxcr4).